The sequence spans 743 residues: 1,4-alpha-glucan branching enzyme GlgB (743 aa).

Residue aspartate 423 is the Nucleophile of the active site. The active-site Proton donor is glutamate 476.

The protein belongs to the glycosyl hydrolase 13 family. GlgB subfamily. In terms of assembly, monomer.

It carries out the reaction Transfers a segment of a (1-&gt;4)-alpha-D-glucan chain to a primary hydroxy group in a similar glucan chain.. It participates in glycan biosynthesis; glycogen biosynthesis. Its function is as follows. Catalyzes the formation of the alpha-1,6-glucosidic linkages in glycogen by scission of a 1,4-alpha-linked oligosaccharide from growing alpha-1,4-glucan chains and the subsequent attachment of the oligosaccharide to the alpha-1,6 position. The sequence is that of 1,4-alpha-glucan branching enzyme GlgB from Pseudomonas fluorescens (strain ATCC BAA-477 / NRRL B-23932 / Pf-5).